Reading from the N-terminus, the 360-residue chain is Photosystem II protein D1 1 (360 aa).

The next 3 helical transmembrane spans lie at 29 to 46 (YVGWFGVLMIPTLLTATT), 118 to 133 (HFLIGVFCYMGREWEL), and 142 to 156 (WICVAFSAPVAAATA). Histidine 118 serves as a coordination point for chlorophyll a. A pheophytin a-binding site is contributed by tyrosine 126. The [CaMn4O5] cluster site is built by aspartate 170 and glutamate 189. The chain crosses the membrane as a helical span at residues 197–218 (FHMLGVAGVFGGSLFSAMHGSL). Histidine 198 is a chlorophyll a binding site. A quinone is bound by residues histidine 215 and 264–265 (SF). Residue histidine 215 participates in Fe cation binding. Histidine 272 is a binding site for Fe cation. A helical membrane pass occupies residues 274-288 (FLGAWPVVGIWFTAL). [CaMn4O5] cluster contacts are provided by histidine 332, glutamate 333, aspartate 342, and alanine 344. Positions 345–360 (AGEQAPVALQAPAING) are excised as a propeptide.

The protein belongs to the reaction center PufL/M/PsbA/D family. As to quaternary structure, PSII is composed of 1 copy each of membrane proteins PsbA, PsbB, PsbC, PsbD, PsbE, PsbF, PsbH, PsbI, PsbJ, PsbK, PsbL, PsbM, PsbT, PsbX, PsbY, PsbZ, Psb30/Ycf12, peripheral proteins PsbO, CyanoQ (PsbQ), PsbU, PsbV and a large number of cofactors. It forms dimeric complexes. Requires The D1/D2 heterodimer binds P680, chlorophylls that are the primary electron donor of PSII, and subsequent electron acceptors. It shares a non-heme iron and each subunit binds pheophytin, quinone, additional chlorophylls, carotenoids and lipids. D1 provides most of the ligands for the Mn4-Ca-O5 cluster of the oxygen-evolving complex (OEC). There is also a Cl(-1) ion associated with D1 and D2, which is required for oxygen evolution. The PSII complex binds additional chlorophylls, carotenoids and specific lipids. as cofactor. Post-translationally, tyr-161 forms a radical intermediate that is referred to as redox-active TyrZ, YZ or Y-Z. In terms of processing, C-terminally processed by CtpA; processing is essential to allow assembly of the oxygen-evolving complex and thus photosynthetic growth.

It is found in the cellular thylakoid membrane. The enzyme catalyses 2 a plastoquinone + 4 hnu + 2 H2O = 2 a plastoquinol + O2. Functionally, photosystem II (PSII) is a light-driven water:plastoquinone oxidoreductase that uses light energy to abstract electrons from H(2)O, generating O(2) and a proton gradient subsequently used for ATP formation. It consists of a core antenna complex that captures photons, and an electron transfer chain that converts photonic excitation into a charge separation. The D1/D2 (PsbA/PsbD) reaction center heterodimer binds P680, the primary electron donor of PSII as well as several subsequent electron acceptors. The sequence is that of Photosystem II protein D1 1 from Picosynechococcus sp. (strain ATCC 27264 / PCC 7002 / PR-6) (Agmenellum quadruplicatum).